Consider the following 300-residue polypeptide: 1D-myo-inositol 2-acetamido-2-deoxy-alpha-D-glucopyranoside deacetylase (300 aa).

3 residues coordinate Zn(2+): histidine 13, aspartate 16, and histidine 147.

It belongs to the MshB deacetylase family. The cofactor is Zn(2+).

The enzyme catalyses 1D-myo-inositol 2-acetamido-2-deoxy-alpha-D-glucopyranoside + H2O = 1D-myo-inositol 2-amino-2-deoxy-alpha-D-glucopyranoside + acetate. In terms of biological role, catalyzes the deacetylation of 1D-myo-inositol 2-acetamido-2-deoxy-alpha-D-glucopyranoside (GlcNAc-Ins) in the mycothiol biosynthesis pathway. The protein is 1D-myo-inositol 2-acetamido-2-deoxy-alpha-D-glucopyranoside deacetylase of Mycolicibacterium paratuberculosis (strain ATCC BAA-968 / K-10) (Mycobacterium paratuberculosis).